Consider the following 102-residue polypeptide: Pyrimidine/purine nucleoside phosphorylase (102 aa).

This sequence belongs to the nucleoside phosphorylase PpnP family.

The catalysed reaction is a purine D-ribonucleoside + phosphate = a purine nucleobase + alpha-D-ribose 1-phosphate. The enzyme catalyses adenosine + phosphate = alpha-D-ribose 1-phosphate + adenine. It carries out the reaction cytidine + phosphate = cytosine + alpha-D-ribose 1-phosphate. It catalyses the reaction guanosine + phosphate = alpha-D-ribose 1-phosphate + guanine. The catalysed reaction is inosine + phosphate = alpha-D-ribose 1-phosphate + hypoxanthine. The enzyme catalyses thymidine + phosphate = 2-deoxy-alpha-D-ribose 1-phosphate + thymine. It carries out the reaction uridine + phosphate = alpha-D-ribose 1-phosphate + uracil. It catalyses the reaction xanthosine + phosphate = alpha-D-ribose 1-phosphate + xanthine. Catalyzes the phosphorolysis of diverse nucleosides, yielding D-ribose 1-phosphate and the respective free bases. Can use uridine, adenosine, guanosine, cytidine, thymidine, inosine and xanthosine as substrates. Also catalyzes the reverse reactions. In Shewanella amazonensis (strain ATCC BAA-1098 / SB2B), this protein is Pyrimidine/purine nucleoside phosphorylase.